The following is a 589-amino-acid chain: tRNA (guanine(26)-N(2))-dimethyltransferase 2 (589 aa).

Positions 9–465 (TVIKEGEAEI…APMEVIWDIM (457 aa)) constitute a Trm1 methyltransferase domain. R36 provides a ligand contact to S-adenosyl-L-methionine. Positions 51–122 (KQEHEAKSSK…RFAPREPKPP (72 aa)) are disordered. Basic and acidic residues-rich tracts occupy residues 68–81 (VIEK…KEET) and 106–122 (DPAK…PKPP). S-adenosyl-L-methionine is bound by residues R134, D152, and V185. Positions 315, 318, 350, and 353 each coordinate Zn(2+). The interval 550 to 589 (LSQHHEELKEEDEEAEPEDNVQDKVDPKRQKTATDNITST) is disordered. The segment covering 558–569 (KEEDEEAEPEDN) has biased composition (acidic residues).

This sequence belongs to the class I-like SAM-binding methyltransferase superfamily. Trm1 family.

The catalysed reaction is guanosine(26) in tRNA + 2 S-adenosyl-L-methionine = N(2)-dimethylguanosine(26) in tRNA + 2 S-adenosyl-L-homocysteine + 2 H(+). In terms of biological role, dimethylates a single guanine residue at position 26 of most tRNAs using S-adenosyl-L-methionine as donor of the methyl groups. This is tRNA (guanine(26)-N(2))-dimethyltransferase 2 from Arabidopsis thaliana (Mouse-ear cress).